Consider the following 196-residue polypeptide: uncharacterized protein (196 aa).

Residues 15–22 (SQGKFNKT), 68–71 (GWWM), Y107, and 123–126 (TWNA) each bind FAD.

It belongs to the oxidoreductase MdaB family. It depends on FAD as a cofactor.

This is an uncharacterized protein from Schizosaccharomyces pombe (strain 972 / ATCC 24843) (Fission yeast).